The chain runs to 143 residues: Large ribosomal subunit protein uL13 (143 aa).

It belongs to the universal ribosomal protein uL13 family. Part of the 50S ribosomal subunit.

Its function is as follows. This protein is one of the early assembly proteins of the 50S ribosomal subunit, although it is not seen to bind rRNA by itself. It is important during the early stages of 50S assembly. The protein is Large ribosomal subunit protein uL13 of Dehalococcoides mccartyi (strain ATCC BAA-2100 / JCM 16839 / KCTC 5957 / BAV1).